A 344-amino-acid polypeptide reads, in one-letter code: Nicotinate-nucleotide--dimethylbenzimidazole phosphoribosyltransferase (344 aa).

E311 acts as the Proton acceptor in catalysis.

The protein belongs to the CobT family.

The enzyme catalyses 5,6-dimethylbenzimidazole + nicotinate beta-D-ribonucleotide = alpha-ribazole 5'-phosphate + nicotinate + H(+). The protein operates within nucleoside biosynthesis; alpha-ribazole biosynthesis; alpha-ribazole from 5,6-dimethylbenzimidazole: step 1/2. Catalyzes the synthesis of alpha-ribazole-5'-phosphate from nicotinate mononucleotide (NAMN) and 5,6-dimethylbenzimidazole (DMB). This chain is Nicotinate-nucleotide--dimethylbenzimidazole phosphoribosyltransferase, found in Aromatoleum aromaticum (strain DSM 19018 / LMG 30748 / EbN1) (Azoarcus sp. (strain EbN1)).